A 549-amino-acid chain; its full sequence is Glucose-6-phosphate isomerase (549 aa).

The Proton donor role is filled by E353. Active-site residues include H384 and K513.

The protein belongs to the GPI family.

It is found in the cytoplasm. The catalysed reaction is alpha-D-glucose 6-phosphate = beta-D-fructose 6-phosphate. The protein operates within carbohydrate biosynthesis; gluconeogenesis. It participates in carbohydrate degradation; glycolysis; D-glyceraldehyde 3-phosphate and glycerone phosphate from D-glucose: step 2/4. In terms of biological role, catalyzes the reversible isomerization of glucose-6-phosphate to fructose-6-phosphate. This chain is Glucose-6-phosphate isomerase, found in Brucella canis (strain ATCC 23365 / NCTC 10854 / RM-666).